The chain runs to 87 residues: Type 3 secretion system needle filament protein (87 aa).

Belongs to the SctF family. The core secretion machinery of the T3SS is composed of approximately 20 different proteins, including cytoplasmic components, a base, an export apparatus and a needle. This subunit polymerizes and forms the helical needle filament. Forms high-order oligomers in vitro. Forms a stable ternary complex with the YscE-YscG chaperone. Interacts directly with YscG but makes very little direct contact with YscE. Interacts with the needle adapter protein YscI/SctI.

The protein resides in the secreted. It localises to the cell surface. With respect to regulation, the secretion and/or polymerization may be controlled by the type III secretion system regulator YopR. Interaction with YscE-YscG chaperone prevents premature polymerization of YscF/SctF in the bacterial cytosol and is required for its stability and efficient secretion. Interaction with the needle adapter protein YscI/SctI is required for YscF/SctF secretion, needle assembly and Yop secretion. The N-terminus varies among bacterial species, not only in amino acid composition but also in the number of amino acids, and may function in manipulating the host response to the advantage of the bacteria. In Y.pestis, the N-terminus can function to decrease cytokine induction, perhaps contributing to a favorable immune environment leading to survival of Y.pestis within the eukaryotic host. Component of the type III secretion system (T3SS), also called injectisome, which is used to inject bacterial effector proteins into eukaryotic host cells. YscF/SctF forms the external needle filament that protrudes from the bacterial surface. Essential for the calcium-dependent regulation of T3SS and Yop secretion. Required to block Yop secretion in the presence of extracellular calcium. May be the extracellular T3SS component that senses extracellular calcium and/or participates in transmitting the calcium signal to the cytoplasmic compartment where the block in secretion is initiated. In terms of biological role, during infection, can induce innate immune responses. The needle proteins interact with host TLR2 or TLR4, and induce signaling by NF-kappa-B and/or AP-1. This activation is MyD88 dependent and results in increased expression of cytokines, including TNF-alpha, IL-6 and IL-8. Innate immune responses are modulated by the N-terminal region of YscF/SctF. The chain is Type 3 secretion system needle filament protein from Yersinia pestis.